The chain runs to 134 residues: NAD(P)H-quinone oxidoreductase subunit 3 (134 aa).

Transmembrane regions (helical) follow at residues 20 to 40 (GYDA…LALV), 78 to 98 (MFAL…PWAV), and 103 to 123 (LGLL…VALA).

This sequence belongs to the complex I subunit 3 family. As to quaternary structure, NDH-1 can be composed of about 15 different subunits; different subcomplexes with different compositions have been identified which probably have different functions.

Its subcellular location is the cellular thylakoid membrane. The catalysed reaction is a plastoquinone + NADH + (n+1) H(+)(in) = a plastoquinol + NAD(+) + n H(+)(out). It catalyses the reaction a plastoquinone + NADPH + (n+1) H(+)(in) = a plastoquinol + NADP(+) + n H(+)(out). Functionally, NDH-1 shuttles electrons from an unknown electron donor, via FMN and iron-sulfur (Fe-S) centers, to quinones in the respiratory and/or the photosynthetic chain. The immediate electron acceptor for the enzyme in this species is believed to be plastoquinone. Couples the redox reaction to proton translocation, and thus conserves the redox energy in a proton gradient. Cyanobacterial NDH-1 also plays a role in inorganic carbon-concentration. This Prochlorococcus marinus (strain MIT 9303) protein is NAD(P)H-quinone oxidoreductase subunit 3.